A 200-amino-acid polypeptide reads, in one-letter code: Dephospho-CoA kinase (200 aa).

Residues 4–200 enclose the DPCK domain; it reads VIGLTGGIGS…QKYIKMSHLY (197 aa). 12–17 provides a ligand contact to ATP; the sequence is GSGKTT.

Belongs to the CoaE family.

The protein resides in the cytoplasm. The catalysed reaction is 3'-dephospho-CoA + ATP = ADP + CoA + H(+). It functions in the pathway cofactor biosynthesis; coenzyme A biosynthesis; CoA from (R)-pantothenate: step 5/5. Catalyzes the phosphorylation of the 3'-hydroxyl group of dephosphocoenzyme A to form coenzyme A. The polypeptide is Dephospho-CoA kinase (Photobacterium profundum (strain SS9)).